The primary structure comprises 288 residues: Energy-coupling factor transporter ATP-binding protein EcfA2 (288 aa).

Positions 3–246 constitute an ABC transporter domain; the sequence is IKLEQLGYCY…PDALVDLGLS (244 aa). 40 to 47 lines the ATP pocket; that stretch reads GHTGSGKS.

It belongs to the ABC transporter superfamily. Energy-coupling factor EcfA family. In terms of assembly, forms a stable energy-coupling factor (ECF) transporter complex composed of 2 membrane-embedded substrate-binding proteins (S component), 2 ATP-binding proteins (A component) and 2 transmembrane proteins (T component).

The protein localises to the cell membrane. Functionally, ATP-binding (A) component of a common energy-coupling factor (ECF) ABC-transporter complex. Unlike classic ABC transporters this ECF transporter provides the energy necessary to transport a number of different substrates. This chain is Energy-coupling factor transporter ATP-binding protein EcfA2, found in Listeria welshimeri serovar 6b (strain ATCC 35897 / DSM 20650 / CCUG 15529 / CIP 8149 / NCTC 11857 / SLCC 5334 / V8).